The chain runs to 30 residues: Cycloviolin-C (30 aa).

The segment at residues 1 to 30 is a cross-link (cyclopeptide (Gly-Asn)); that stretch reads GIPCGESCVFIPCLTTVAGCSCKNKVCYRN. Disulfide bonds link C4–C20, C8–C22, and C13–C27.

Post-translationally, this is a cyclic peptide.

Its function is as follows. Probably participates in a plant defense mechanism. Has anti-HIV activity. The polypeptide is Cycloviolin-C (Leonia cymosa (Sacha uba)).